Consider the following 382-residue polypeptide: Gas vesicle protein C1 (382 aa).

Basic and acidic residues predominate over residues 1–18; sequence MSVTDKRDEMSTARDKFA. Residues 1–21 are disordered; the sequence is MSVTDKRDEMSTARDKFAESQ. A run of 7 repeats spans residues 22–60, 61–92, 93–130, 131–168, 169–200, 201–240, and 241–284. The tract at residues 22-284 is 7 X approximate tandem repeats; the sequence is QEFESYADEF…VEAEAEVSPD (263 aa). Residues 260 to 302 are compositionally biased toward acidic residues; that stretch reads GAAEAEAEPVEADADVEAEAEVSPDEAGGESAGTEEEETEPAE. Residues 260-382 form a disordered region; it reads GAAEAEAEPV…DVPLRPDDKT (123 aa). The segment covering 303 to 316 has biased composition (low complexity); it reads VETAAPEVEGSPAD. The segment covering 317-336 has biased composition (acidic residues); sequence TADEAEDTEAEEETEEEAPE. Residues 365–382 are compositionally biased toward basic and acidic residues; that stretch reads EYRDEYGEDVPLRPDDKT.

The protein belongs to the halobacterial gas vesicle GvpC family. Forms homodimers, interacts with GvpF1, GvpH1, GvpI1, GvpL1, GvpN1 and GvpO1 via its C-terminus (residues 329-382).

The protein localises to the gas vesicle. The protein resides in the cytoplasm. Functionally, confers stability, involved in shaping gas vesicles. Gas vesicles are hollow, gas filled proteinaceous nanostructures found in several microbial planktonic microorganisms. They allow positioning of halobacteria at the optimal depth for growth in the poorly aerated, shallow brine pools of their habitat. In terms of biological role, expression of a 9.5 kb p-vac DNA fragment containing 2 divergently transcribed regions (gvpD-gvpE-gvpF-gvpG-gvpH-gvpI-gvpJ-gvpK-gvpL-gvpM and gvpA-gvpC-gvpN-gvpO) allows H.volcanii to produce gas vesicles. A similar region restores gas vesicle production in H.halobium without the p-vac locus, but it still has the c-vac locus. The sequence is that of Gas vesicle protein C1 (gvpC1) from Halobacterium salinarum (strain ATCC 700922 / JCM 11081 / NRC-1) (Halobacterium halobium).